Reading from the N-terminus, the 487-residue chain is NADH-quinone oxidoreductase subunit N (487 aa).

Transmembrane regions (helical) follow at residues 8 to 28 (LIAMLPLLIVGLTVVVVMLSI), 35 to 55 (FINATLTVIGLNLALLSLYFV), 78 to 98 (GLVIIASLATSTFAYPWLVGY), 104 to 124 (EFYLLVLIAALGGILLASANH), 125 to 145 (LASLFLGIELLTLPLFGLIGY), 159 to 179 (YMLLSAAASSFLLFGMALLYA), 203 to 223 (ILAGLGMMIVGLGFKLSLVPF), 235 to 255 (PAPVSTFLATASKIAIFAVVM), 271 to 291 (LVLSIIAVASILFGNLMAISQ), 297 to 317 (LLGYSSIAHLGYLLIALVAVQ), 328 to 348 (IGVYLAGYLFSSLGAFGVVSL), 376 to 396 (AVMTVMMLSLAGIPMTLGFIG), 409 to 428 (LWWLTGAVVLGSAIGLYYYL), and 451 to 471 (ALTAGGVVVLISAILVLVLGI).

It belongs to the complex I subunit 2 family. NDH-1 is composed of 13 different subunits. Subunits NuoA, H, J, K, L, M, N constitute the membrane sector of the complex.

It is found in the cell inner membrane. The enzyme catalyses a quinone + NADH + 5 H(+)(in) = a quinol + NAD(+) + 4 H(+)(out). NDH-1 shuttles electrons from NADH, via FMN and iron-sulfur (Fe-S) centers, to quinones in the respiratory chain. The immediate electron acceptor for the enzyme in this species is believed to be ubiquinone. Couples the redox reaction to proton translocation (for every two electrons transferred, four hydrogen ions are translocated across the cytoplasmic membrane), and thus conserves the redox energy in a proton gradient. In Yersinia pseudotuberculosis serotype O:1b (strain IP 31758), this protein is NADH-quinone oxidoreductase subunit N.